A 220-amino-acid polypeptide reads, in one-letter code: Ribosomal RNA large subunit methyltransferase E (220 aa).

Residues glycine 60, tryptophan 62, aspartate 92, aspartate 108, and aspartate 133 each contribute to the S-adenosyl-L-methionine site. Lysine 173 (proton acceptor) is an active-site residue.

Belongs to the class I-like SAM-binding methyltransferase superfamily. RNA methyltransferase RlmE family.

The protein localises to the cytoplasm. The catalysed reaction is uridine(2552) in 23S rRNA + S-adenosyl-L-methionine = 2'-O-methyluridine(2552) in 23S rRNA + S-adenosyl-L-homocysteine + H(+). In terms of biological role, specifically methylates the uridine in position 2552 of 23S rRNA at the 2'-O position of the ribose in the fully assembled 50S ribosomal subunit. This Burkholderia thailandensis (strain ATCC 700388 / DSM 13276 / CCUG 48851 / CIP 106301 / E264) protein is Ribosomal RNA large subunit methyltransferase E.